The sequence spans 234 residues: Glucosamine-6-phosphate deaminase (234 aa).

Asp-63 serves as the catalytic Proton acceptor; for enolization step. Asn-129 (for ring-opening step) is an active-site residue. His-131 serves as the catalytic Proton acceptor; for ring-opening step. Glu-136 functions as the For ring-opening step in the catalytic mechanism.

It belongs to the glucosamine/galactosamine-6-phosphate isomerase family. NagB subfamily.

The catalysed reaction is alpha-D-glucosamine 6-phosphate + H2O = beta-D-fructose 6-phosphate + NH4(+). The protein operates within amino-sugar metabolism; N-acetylneuraminate degradation; D-fructose 6-phosphate from N-acetylneuraminate: step 5/5. In terms of biological role, catalyzes the reversible isomerization-deamination of glucosamine 6-phosphate (GlcN6P) to form fructose 6-phosphate (Fru6P) and ammonium ion. This is Glucosamine-6-phosphate deaminase from Listeria welshimeri serovar 6b (strain ATCC 35897 / DSM 20650 / CCUG 15529 / CIP 8149 / NCTC 11857 / SLCC 5334 / V8).